A 493-amino-acid chain; its full sequence is N-acetylglucosamine kinase 1 (493 aa).

In terms of domain architecture, Hexokinase spans 27–490; it reads ESSVLSSIVE…SIIGAAIGAA (464 aa). The tract at residues 79 to 221 is hexokinase small subdomain; it reads TGDEHGQYLV…GLTLDVQSIL (143 aa). The segment at 222–479 is hexokinase large subdomain; sequence NDSLAVYSAG…IKVDLKLIEN (258 aa).

Belongs to the hexokinase family. In terms of assembly, interacts with histone deacetylase SIR2 under filamentation-inducing conditions.

It is found in the cytoplasm. It localises to the nucleus. The protein localises to the mitochondrion. It carries out the reaction N-acetyl-D-glucosamine + ATP = N-acetyl-D-glucosamine 6-phosphate + ADP + H(+). It catalyses the reaction D-mannose + ATP = D-mannose 6-phosphate + ADP + H(+). The catalysed reaction is D-glucose + ATP = D-glucose 6-phosphate + ADP + H(+). The enzyme catalyses D-glucosamine + ATP = D-glucosamine 6-phosphate + ADP + H(+). Its pathway is carbohydrate metabolism; hexose metabolism. It functions in the pathway carbohydrate degradation; glycolysis; D-glyceraldehyde 3-phosphate and glycerone phosphate from D-glucose: step 1/4. Functionally, component of the N-acetylglucosamine catabolic cascade that phosphorylates N-acetylglucosamine (GlcNAc), and allows the unique ability to utilise GlcNAc as carbon source. Converts GlcNAc to GlcNAc-6-P. Also able to phosphorylate glucose, glucosamine (GlcN), and mannose. Galactose, fructose, N-acetylmannosamine (ManNAc), mannosamine (ManN), galactosamine (GalN), and N-acetylgalactosamine (GalNAc) are not phosphorylated by HXK1. GlcNAc metabolism is closely associated with virulence and morphogenesis, and is involved in the cell wall synthesis. Acts both as a repressor and an activator of genes involved in maintaining cellular homeostasis. Contributes to white-opaque morphological transition and plays a role as a filamentation repressor. This chain is N-acetylglucosamine kinase 1, found in Candida albicans (strain SC5314 / ATCC MYA-2876) (Yeast).